Consider the following 211-residue polypeptide: Ion-translocating oxidoreductase complex subunit G (211 aa).

A helical transmembrane segment spans residues 9–29 (GLTLAIFACATTGLVALTQYL). Thr175 is modified (FMN phosphoryl threonine).

This sequence belongs to the RnfG family. As to quaternary structure, the complex is composed of six subunits: RnfA, RnfB, RnfC, RnfD, RnfE and RnfG. FMN serves as cofactor.

Its subcellular location is the cell inner membrane. Functionally, part of a membrane-bound complex that couples electron transfer with translocation of ions across the membrane. In Vibrio parahaemolyticus serotype O3:K6 (strain RIMD 2210633), this protein is Ion-translocating oxidoreductase complex subunit G.